Here is a 267-residue protein sequence, read N- to C-terminus: NAD kinase (267 aa).

The active-site Proton acceptor is Asp45. NAD(+) is bound by residues 45 to 46 (DG), 121 to 122 (NE), Arg147, Asp149, 160 to 165 (TAYSKS), and Ala184.

This sequence belongs to the NAD kinase family. Requires a divalent metal cation as cofactor.

It is found in the cytoplasm. The enzyme catalyses NAD(+) + ATP = ADP + NADP(+) + H(+). Its function is as follows. Involved in the regulation of the intracellular balance of NAD and NADP, and is a key enzyme in the biosynthesis of NADP. Catalyzes specifically the phosphorylation on 2'-hydroxyl of the adenosine moiety of NAD to yield NADP. The polypeptide is NAD kinase (Lactobacillus acidophilus (strain ATCC 700396 / NCK56 / N2 / NCFM)).